The primary structure comprises 440 residues: MAENNENISKNVDVRPKTSRSRSADRKDGYVWSGKKLSWSKKSESYSDAETVNGIEKTEVSLRNQERKHSCSSIELDLDHSCGHRFLGRSLKQKLQDAVGQCFPIKNCSSRHSSGLPSKRKIHISELMLDKCPFPPRSDLAFRWHFIKRHTAPINSKSDEWVSTDLSQAELKDGQLKRRNMEESINCFSHTNVQPCVITTDNALCREGPITGSVMNLVSNNSIEDSDMDSDDEILTLCTSSRKRNKPKWELDDEILQLETPPKYHTQIDYVHCLVPDLLQINNNPCYWGVMDKYAAEALLEGKPEGTFLLRDSAQEDYLFSVSFRRYSRSLHARIEQWNHNFSFDAHDPCVFHSPDITGLLEHYKDPSACMFFEPLLSTPLIRTFPFSLQHICRTVICNCTTYDGIDALPIPSSMKLYLKEYHYKSKVRVLRIDAPEQQC.

The segment covering 1–10 (MAENNENISK) has biased composition (polar residues). Residues 1-29 (MAENNENISKNVDVRPKTSRSRSADRKDG) form a disordered region. Positions 12–29 (VDVRPKTSRSRSADRKDG) are enriched in basic and acidic residues. Residues 286–381 (CYWGVMDKYA…FFEPLLSTPL (96 aa)) form the SH2 domain. The SOCS box domain maps to 376–425 (LLSTPLIRTFPFSLQHICRTVICNCTTYDGIDALPIPSSMKLYLKEYHYK).

Its pathway is protein modification; protein ubiquitination. SOCS family proteins form part of a classical negative feedback system that regulates cytokine signal transduction. Substrate-recognition component of a SCF-like ECS (Elongin BC-CUL2/5-SOCS-box protein) E3 ubiquitin-protein ligase complex which mediates the ubiquitination and subsequent proteasomal degradation of target proteins. Inhibits EGF signaling by mediating the degradation of the Tyr-phosphorylated EGF receptor/EGFR. This Pongo abelii (Sumatran orangutan) protein is Suppressor of cytokine signaling 4 (SOCS4).